The following is a 157-amino-acid chain: Ribosome maturation factor RimP (157 aa).

Belongs to the RimP family.

It is found in the cytoplasm. In terms of biological role, required for maturation of 30S ribosomal subunits. The polypeptide is Ribosome maturation factor RimP (Geobacillus kaustophilus (strain HTA426)).